The sequence spans 520 residues: Ribonuclease Y (520 aa).

The helical transmembrane segment at 4 to 24 (TVWILISILLATVGAVVGFFV) threads the bilayer. Residues 210-273 (TVSVVNLPND…ETARIALDKL (64 aa)) form the KH domain. One can recognise an HD domain in the interval 336–429 (VLKHSMEVAY…VAAADALSAA (94 aa)).

The protein belongs to the RNase Y family.

The protein localises to the cell membrane. Functionally, endoribonuclease that initiates mRNA decay. In Bacillus cereus (strain ZK / E33L), this protein is Ribonuclease Y.